Consider the following 359-residue polypeptide: MQIIADLLNTIPAINSAAMSRAQRHVDGLFKPVGSLGKLEALAIQLAGMPGVNGIPHVGKKAVLVMCADHGVWEEGVAISPKEVTAIQAENMTRGTTGVCVLAAQAGANVHVIDVGIDTAEPIPGLINMRVARGSGNIASAPAMSRRQAEKLLLDVICYTRELAKNGVTLFGVGELGMANTTPAAAIVSTITGRDPEEVVGIGANLPTDKLANKIDVVRRAITLNQPNPQDGVDVLAKVGGFDLVGIAGVMLGAASCGLPVLLDGFLSYAAALAACQMSPAIKPYLIPSHLSAEKGARIALSHLGLEPYLNRDMRIGEGIVQALAMSIIEAACAIYNNMGELAASNIVLPGNTTSDLNS.

Residue Glu318 is the Proton acceptor of the active site.

The protein belongs to the CobT family. Homodimer.

The catalysed reaction is 5,6-dimethylbenzimidazole + nicotinate beta-D-ribonucleotide = alpha-ribazole 5'-phosphate + nicotinate + H(+). It participates in nucleoside biosynthesis; alpha-ribazole biosynthesis; alpha-ribazole from 5,6-dimethylbenzimidazole: step 1/2. Its function is as follows. Catalyzes the synthesis of alpha-ribazole-5'-phosphate from nicotinate mononucleotide (NAMN) and 5,6-dimethylbenzimidazole (DMB). In Shigella flexneri serotype 5b (strain 8401), this protein is Nicotinate-nucleotide--dimethylbenzimidazole phosphoribosyltransferase.